The sequence spans 441 residues: Cysteine proteinase (441 aa).

A disulfide bond links Cys249 and Cys290. The active site involves Cys252. Residues Asn270 and Asn345 are each glycosylated (N-linked (GlcNAc...) asparagine). Active-site residues include His381 and Asn403.

It belongs to the peptidase C1 family.

In Theileria annulata, this protein is Cysteine proteinase (TACP).